The following is a 573-amino-acid chain: F-box/WD repeat-containing protein 5 (573 aa).

Residues 3 to 49 (EGGLPLLPDSLVYQIFLSLGPADVLAAGLVCRQWQAVSRDEFLWKEQ) form the F-box domain. The WD 1 repeat unit spans residues 90 to 129 (EHTDQVLHLSFSHSGYQFASCSKDCTVKIWNNDLTISLLH). Serine 151 carries the phosphoserine; by PLK4 modification. Positions 308-316 (RRVFDSVLD) match the D-box motif. WD repeat units lie at residues 470–509 (TPNDECFFIFLDVSRDFVASGAEDRHGYIWDRHYNICLAK) and 511–551 (RHED…RVLQ).

Belongs to the FBXW5 family. As to quaternary structure, part of the SCF (SKP1-CUL1-F-box) E3 ubiquitin-protein ligase complex SCF(FBXW5) composed of CUL1, SKP1, RBX1 and FBXW5. Component of the DCX(FBXW5) E3 ubiquitin ligase complex, at least composed of (CUL4A or CUL4B), DDB1, FBXW5 and RBX1. Interacts with CDC20, TSC1, TSC2 and SASS6. Interacts with EPS8. Interacts with TNFAIP8L1; TNFAIP8L1 competes with TSC2 to bind FBXW5 increasing TSC2 stability by preventing its ubiquitination. Post-translationally, phosphorylated at Ser-151 by PLK4 during the G1/S transition, leading to inhibit its ability to ubiquitinate SASS6. In terms of processing, ubiquitinated and degraded by the APC/C complex during mitosis and G1 phase. Widely expressed in adult and embryonal tissues.

The protein localises to the cytoplasm. The protein operates within protein modification; protein ubiquitination. Substrate recognition component of both SCF (SKP1-CUL1-F-box protein) and DCX (DDB1-CUL4-X-box) E3 ubiquitin-protein ligase complexes. Substrate-specific adapter of the DCX(FBXW5) E3 ubiquitin-protein ligase complex which mediates the polyubiquitination and subsequent degradation of TSC2. May also act as a negative regulator of MAP3K7/TAK1 signaling in the interleukin-1B (IL1B) signaling pathway. Substrate recognition component of the SCF(FBXW5) E3 ubiquitin-protein ligase complex which mediates the ubiquitination and subsequent proteasomal degradation of SASS6 during S phase, leading to prevent centriole reduplication. The SCF(FBXW5) complex also mediates ubiquitination and degradation of actin-regulator EPS8 during G2 phase, leading to the transient degradation of EPS8 and subsequent cell shape changes required to allow mitotic progression. The polypeptide is F-box/WD repeat-containing protein 5 (Fbxw5) (Mus musculus (Mouse)).